Consider the following 204-residue polypeptide: HTH-type transcriptional repressor KstR2 (204 aa).

An HTH tetR-type domain is found at 13-73 (SGRRTELLDI…EILRGFLDDL (61 aa)). The H-T-H motif DNA-binding region spans 36–55 (TVRDIADAAGILSGSLYHHF).

In terms of assembly, homodimer.

Its function is as follows. Controls the expression of a small regulon that may play a role in the utilization of cholesterol. The sequence is that of HTH-type transcriptional repressor KstR2 (kstR2) from Rhodococcus jostii (strain RHA1).